A 281-amino-acid chain; its full sequence is Proteasome subunit beta (281 aa).

The propeptide at 1 to 53 (MEANTRSTGRLPAAFLTPGSSSFMDFLSDHQPELLPGKRQLPPTQGVIEAPHG) is removed in mature form; by autocatalysis. Residue threonine 54 is the Nucleophile of the active site.

Belongs to the peptidase T1B family. In terms of assembly, the 20S proteasome core is composed of 14 alpha and 14 beta subunits that assemble into four stacked heptameric rings, resulting in a barrel-shaped structure. The two inner rings, each composed of seven catalytic beta subunits, are sandwiched by two outer rings, each composed of seven alpha subunits. The catalytic chamber with the active sites is on the inside of the barrel. Has a gated structure, the ends of the cylinder being occluded by the N-termini of the alpha-subunits. Is capped by the proteasome-associated ATPase, ARC.

Its subcellular location is the cytoplasm. The enzyme catalyses Cleavage of peptide bonds with very broad specificity.. It participates in protein degradation; proteasomal Pup-dependent pathway. The formation of the proteasomal ATPase ARC-20S proteasome complex, likely via the docking of the C-termini of ARC into the intersubunit pockets in the alpha-rings, may trigger opening of the gate for substrate entry. Interconversion between the open-gate and close-gate conformations leads to a dynamic regulation of the 20S proteasome proteolysis activity. Functionally, component of the proteasome core, a large protease complex with broad specificity involved in protein degradation. The chain is Proteasome subunit beta from Streptomyces scabiei (strain 87.22).